Reading from the N-terminus, the 751-residue chain is E3 ubiquitin-protein ligase SMURF2 (751 aa).

One can recognise a C2 domain in the interval 1-119 (MSNQGSRRNG…TGYQRLDLCK (119 aa)). Residues 157 to 190 (NDLPDGWEERRTASGRIQYLNHITRTTQWERPTR) form the WW 1 domain. The span at 214–226 (GTNGASCGQTSDP) shows a compositional bias: polar residues. The tract at residues 214–236 (GTNGASCGQTSDPRISERRVRSQ) is disordered. WW domains lie at 251 to 284 (PDLP…DPRV) and 297 to 330 (GPLP…DPRL). The HECT domain occupies 417-751 (RPKDLWKRLM…IEETCGFAVE (335 aa)). The active-site Glycyl thioester intermediate is the Cys-719.

It is found in the nucleus. It localises to the cytoplasm. Its subcellular location is the cell membrane. The protein localises to the membrane raft. It carries out the reaction S-ubiquitinyl-[E2 ubiquitin-conjugating enzyme]-L-cysteine + [acceptor protein]-L-lysine = [E2 ubiquitin-conjugating enzyme]-L-cysteine + N(6)-ubiquitinyl-[acceptor protein]-L-lysine.. The protein operates within protein modification; protein ubiquitination. Its function is as follows. E3 ubiquitin-protein ligase which accepts ubiquitin from an E2 ubiquitin-conjugating enzyme in the form of a thioester and then directly transfers the ubiquitin to targeted substrates. The chain is E3 ubiquitin-protein ligase SMURF2 (smurf2) from Xenopus laevis (African clawed frog).